Reading from the N-terminus, the 331-residue chain is Tyrosine--tRNA ligase (331 aa).

Residues tyrosine 31, tyrosine 155, glutamine 159, aspartate 162, and glutamine 177 each coordinate L-tyrosine. Residues 218–222 (KMSKS) carry the 'KMSKS' region motif. Lysine 221 is an ATP binding site.

This sequence belongs to the class-I aminoacyl-tRNA synthetase family. TyrS type 4 subfamily. Homodimer.

The protein localises to the cytoplasm. It carries out the reaction tRNA(Tyr) + L-tyrosine + ATP = L-tyrosyl-tRNA(Tyr) + AMP + diphosphate + H(+). Functionally, catalyzes the attachment of tyrosine to tRNA(Tyr) in a two-step reaction: tyrosine is first activated by ATP to form Tyr-AMP and then transferred to the acceptor end of tRNA(Tyr). The protein is Tyrosine--tRNA ligase of Thermoplasma volcanium (strain ATCC 51530 / DSM 4299 / JCM 9571 / NBRC 15438 / GSS1).